The sequence spans 263 residues: Proteasome subunit beta type-4 (263 aa).

Position 1 is an N-acetylmethionine (methionine 1). Residues 1–44 (MEAFWESRTGHWAGGPAPGQFYRVPSTPSCLMDPMSAPARPITR) constitute a propeptide that is removed on maturation. Serine 26 is subject to Phosphoserine. Position 101 is a phosphotyrosine (tyrosine 101).

The protein belongs to the peptidase T1B family. As to quaternary structure, the 26S proteasome consists of a 20S proteasome core and two 19S regulatory subunits. The 20S proteasome core is a barrel-shaped complex made of 28 subunits that are arranged in four stacked rings. The two outer rings are each formed by seven alpha subunits, and the two inner rings are formed by seven beta subunits. The proteolytic activity is exerted by three beta-subunits PSMB5, PSMB6 and PSMB7. Forms a ternary complex with SMAD1 and OAZ1 before PSMB4 is incorporated into the 20S proteasome. Interacts with PRPF19.

The protein localises to the cytoplasm. It is found in the nucleus. In terms of biological role, non-catalytic component of the 20S core proteasome complex involved in the proteolytic degradation of most intracellular proteins. This complex plays numerous essential roles within the cell by associating with different regulatory particles. Associated with two 19S regulatory particles, forms the 26S proteasome and thus participates in the ATP-dependent degradation of ubiquitinated proteins. The 26S proteasome plays a key role in the maintenance of protein homeostasis by removing misfolded or damaged proteins that could impair cellular functions, and by removing proteins whose functions are no longer required. Associated with the PA200 or PA28, the 20S proteasome mediates ubiquitin-independent protein degradation. This type of proteolysis is required in several pathways including spermatogenesis (20S-PA200 complex) or generation of a subset of MHC class I-presented antigenic peptides (20S-PA28 complex). SMAD1/OAZ1/PSMB4 complex mediates the degradation of the CREBBP/EP300 repressor SNIP1. This chain is Proteasome subunit beta type-4 (Psmb4), found in Rattus norvegicus (Rat).